Here is a 145-residue protein sequence, read N- to C-terminus: UPF0260 protein VV2402 (145 aa).

The protein belongs to the UPF0260 family.

This Vibrio vulnificus (strain YJ016) protein is UPF0260 protein VV2402.